Consider the following 319-residue polypeptide: Olfactory receptor 51F1 (319 aa).

The Extracellular segment spans residues Met1–Ser37. Residues Ile38–Ile58 traverse the membrane as a helical segment. Residues Ile59–Leu75 are Cytoplasmic-facing. The helical transmembrane segment at Ser76 to Phe96 threads the bilayer. The Extracellular segment spans residues Glu97–Cys106. The cysteines at positions 106 and 188 are disulfide-linked. A helical membrane pass occupies residues Ile107–Thr127. At Ala128–Arg149 the chain is on the cytoplasmic side. A helical transmembrane segment spans residues Ile150 to Leu170. Residues Leu171–Asp211 are Extracellular-facing. The chain crosses the membrane as a helical span at residues Leu212–His232. The Cytoplasmic segment spans residues Ser233–Thr249. A helical transmembrane segment spans residues Cys250–Val270. Residues Tyr271–Arg279 are Extracellular-facing. A helical membrane pass occupies residues Val280 to Ile300. The Cytoplasmic segment spans residues Asp301–Lys319.

It belongs to the G-protein coupled receptor 1 family.

It localises to the cell membrane. Functionally, odorant receptor. The chain is Olfactory receptor 51F1 (OR51F1) from Homo sapiens (Human).